The following is a 353-amino-acid chain: MSQKVRIALDAMGGDFGASVVVPGAAISLTRHPDSEFLLFGDSALINKQLDLHPALQKVSRVFHTDIAVSMHDKPSQALRRGRKVSSMWLAIEAVKKGEADVAVSAGNTGALMAMARFCLRTLPGIDRPAIAAIWPTIRGDSVVLDLGATIGGDAEHLKALAVMGSAMASVLFDLERPTVGLLNIGVEEIKGGEEIRAAAELLREMNSPQFEFIGFVEGDGIGKGAADVIVSEGFSGNIALKAAEGTARQISEYLKAAMSRTWRSKIGYLFAREAFRSLRDKMDPNKSNGGVFLGLNGVVVKSHGGTSADGFAYAVDVGYDMVRYDLLNKINQTLNRGGGALGGTPTAREAVS.

This sequence belongs to the PlsX family. Homodimer. Probably interacts with PlsY.

The protein localises to the cytoplasm. The catalysed reaction is a fatty acyl-[ACP] + phosphate = an acyl phosphate + holo-[ACP]. The protein operates within lipid metabolism; phospholipid metabolism. In terms of biological role, catalyzes the reversible formation of acyl-phosphate (acyl-PO(4)) from acyl-[acyl-carrier-protein] (acyl-ACP). This enzyme utilizes acyl-ACP as fatty acyl donor, but not acyl-CoA. In Rhodopseudomonas palustris (strain BisB18), this protein is Phosphate acyltransferase.